The following is a 447-amino-acid chain: N-succinylarginine dihydrolase (447 aa).

Residues 19–28 (AGLSFGNEAS), Asn110, and 137–138 (HR) each bind substrate. The active site involves Glu174. Arg212 provides a ligand contact to substrate. His248 is a catalytic residue. Substrate-binding residues include Asp250 and Asn359. Cys365 (nucleophile) is an active-site residue.

This sequence belongs to the succinylarginine dihydrolase family. As to quaternary structure, homodimer.

The enzyme catalyses N(2)-succinyl-L-arginine + 2 H2O + 2 H(+) = N(2)-succinyl-L-ornithine + 2 NH4(+) + CO2. Its pathway is amino-acid degradation; L-arginine degradation via AST pathway; L-glutamate and succinate from L-arginine: step 2/5. In terms of biological role, catalyzes the hydrolysis of N(2)-succinylarginine into N(2)-succinylornithine, ammonia and CO(2). The polypeptide is N-succinylarginine dihydrolase (Escherichia coli O6:H1 (strain CFT073 / ATCC 700928 / UPEC)).